We begin with the raw amino-acid sequence, 263 residues long: LIM and SH3 domain protein 1 (263 aa).

The residue at position 1 (methionine 1) is an N-acetylmethionine. The region spanning 5–56 is the LIM zinc-binding domain; sequence CARCGKIVYPTEKVNCLDKYWHKACFHCETCKMTLNMKNYKGYEKKPYCNAH. The residue at position 42 (lysine 42) is an N6-acetyllysine. Nebulin repeat units lie at residues 61 to 95 and 97 to 131; these read SFTM…KNKG and GFSV…KSRM. Threonine 68 carries the post-translational modification Phosphothreonine. Lysine 75 is subject to N6-methyllysine. Serine 99 is subject to Phosphoserine. Position 104 is a phosphothreonine (threonine 104). Lysine 112 bears the N6-succinyllysine mark. A phosphoserine mark is found at serine 118 and serine 134. A disordered region spans residues 123 to 207; it reads HEEFEKSRMG…QRSAPGGGGK (85 aa). Polar residues predominate over residues 148-162; it reads DSSSYRRPTEQQQPQ. The residue at position 156 (threonine 156) is a Phosphothreonine; by PKA. The region spanning 204–263 is the SH3 domain; that stretch reads GGGKRYRAVYDYSAADEDEVSFQDGDTIVNVQQIDDGWMYGTVERTGDTGMLPANYVEAI.

In terms of assembly, interacts with F-actin. Interacts with KBTBD10. Interacts with ANKRD54.

It is found in the cytoplasm. The protein resides in the cell cortex. It localises to the cytoskeleton. Its function is as follows. Plays an important role in the regulation of dynamic actin-based, cytoskeletal activities. Agonist-dependent changes in LASP1 phosphorylation may also serve to regulate actin-associated ion transport activities, not only in the parietal cell but also in certain other F-actin-rich secretory epithelial cell types. The polypeptide is LIM and SH3 domain protein 1 (Lasp1) (Mus musculus (Mouse)).